Consider the following 298-residue polypeptide: 4-hydroxy-tetrahydrodipicolinate synthase (298 aa).

Threonine 51 serves as a coordination point for pyruvate. Tyrosine 140 functions as the Proton donor/acceptor in the catalytic mechanism. Lysine 168 acts as the Schiff-base intermediate with substrate in catalysis. Isoleucine 210 lines the pyruvate pocket.

Belongs to the DapA family. Homotetramer; dimer of dimers.

Its subcellular location is the cytoplasm. The catalysed reaction is L-aspartate 4-semialdehyde + pyruvate = (2S,4S)-4-hydroxy-2,3,4,5-tetrahydrodipicolinate + H2O + H(+). It participates in amino-acid biosynthesis; L-lysine biosynthesis via DAP pathway; (S)-tetrahydrodipicolinate from L-aspartate: step 3/4. Its function is as follows. Catalyzes the condensation of (S)-aspartate-beta-semialdehyde [(S)-ASA] and pyruvate to 4-hydroxy-tetrahydrodipicolinate (HTPA). The sequence is that of 4-hydroxy-tetrahydrodipicolinate synthase from Acidovorax sp. (strain JS42).